The following is a 118-amino-acid chain: Succinate dehydrogenase assembly factor 1, mitochondrial (118 aa).

The LYR motif 1; required for interaction with HSC20 motif lies at Leu14–Arg16. The LYR motif 2; not required for interaction with HSC20 signature appears at Leu53 to Arg55. Residues Leu53–Arg65 form an interaction with SDHB region. Residues His68–Arg118 are disordered. Residues Arg94–Arg118 are compositionally biased toward basic and acidic residues.

It belongs to the complex I LYR family. SDHAF1 subfamily. Interacts with SDHB within an SDHA-SDHB subcomplex. Also interacts with the iron-sulfur transfer complex formed by HSC20, HSPA9 and ISCU through direct binding to HSC20. Binding of SDHAF1 to SDHB precedes and is necessary for recruitment of the iron-sulfur transfer complex by SDHAF1.

The protein localises to the mitochondrion matrix. Its function is as follows. Plays an essential role in the assembly of succinate dehydrogenase (SDH), an enzyme complex (also referred to as respiratory complex II) that is a component of both the tricarboxylic acid (TCA) cycle and the mitochondrial electron transport chain, and which couples the oxidation of succinate to fumarate with the reduction of ubiquinone (coenzyme Q) to ubiquinol. Promotes maturation of the iron-sulfur protein subunit Sdhb of the SDH catalytic dimer, protecting it from the deleterious effects of oxidants. May act together with SDHAF3. Contributes to iron-sulfur cluster incorporation into SDHB by binding to SDHB and recruiting the iron-sulfur transfer complex formed by HSC20, HSPA9 and ISCU through direct binding to HSC20. In Mus musculus (Mouse), this protein is Succinate dehydrogenase assembly factor 1, mitochondrial.